The primary structure comprises 364 residues: GDSL esterase/lipase At1g29660 (364 aa).

A signal peptide spans 1-26 (MESYLRKWCLVSVWVLLLGLGFKVKA). Residue Ser-39 is the Nucleophile of the active site. Catalysis depends on charge relay system residues Asp-328 and His-331.

Belongs to the 'GDSL' lipolytic enzyme family. As to expression, found in phloem exudates.

The protein resides in the secreted. It localises to the extracellular space. Its subcellular location is the apoplast. Its function is as follows. Involved in EDS1-dependent systemic acquired resistance, maybe in phloem-mediated long-distance signaling. The polypeptide is GDSL esterase/lipase At1g29660 (Arabidopsis thaliana (Mouse-ear cress)).